We begin with the raw amino-acid sequence, 223 residues long: Small ribosomal subunit protein uS3 (223 aa).

The KH type-2 domain occupies Val39 to Arg107.

The protein belongs to the universal ribosomal protein uS3 family. In terms of assembly, part of the 30S ribosomal subunit. Forms a tight complex with proteins S10 and S14.

In terms of biological role, binds the lower part of the 30S subunit head. Binds mRNA in the 70S ribosome, positioning it for translation. In Francisella tularensis subsp. novicida (strain U112), this protein is Small ribosomal subunit protein uS3.